Here is a 793-residue protein sequence, read N- to C-terminus: Potassium transporter 18 (793 aa).

Over 1–53 (METRTNEYSRKGAMWELERNLDQPMDAEAGRLRNMYREKTYPTILLLRLAFQS) the chain is Cytoplasmic. The helical transmembrane segment at 54-74 (LGVVFGDLGTSPLYVFYNIFP) threads the bilayer. Residues 75–86 (HGIEDTEQVIGA) are Extracellular-facing. A helical transmembrane segment spans residues 87–107 (LSLIIYSLTLIPLVKYVFIVL). At 108–172 (RANDNGQGGT…WLEGHQFRKN (65 aa)) the chain is on the cytoplasmic side. A helical membrane pass occupies residues 173–193 (LILILVLFGTCMAVGDGILTP). At 194–214 (AISVLSATGGIQVEEGRMRND) the chain is on the extracellular side. A helical membrane pass occupies residues 215–235 (VVVIISVLILIGLFSMQHYGT). The Cytoplasmic segment spans residues 236-237 (DK). A helical transmembrane segment spans residues 238 to 258 (VSWLFAPIVFVWFILIGILGA). The Extracellular segment spans residues 259-287 (VNICKYDHSVLKAFNPVYVYRYFKRGKTS). Residues 288–308 (WTSLGGIMLSITGTEALFADL) traverse the membrane as a helical segment. Position 309 (Ser-309) is a topological domain, cytoplasmic. The helical transmembrane segment at 310–330 (YFPVQAIQIAFTVVVFPCLLL) threads the bilayer. Over 331–351 (QYTGQAAFIAANTNQVSHAFY) the chain is Extracellular. The chain crosses the membrane as a helical span at residues 352–372 (ISLPAPILWPAFAVATAAAIV). Residues 373–409 (ASQATISATYSIIKQALALGCFPRVKIIHTSKKYLGQ) are Cytoplasmic-facing. Residues 410–430 (IYSPDINWILMVFCIAVTAGF) traverse the membrane as a helical segment. At 431 to 442 (KNQSQIANAYGT) the chain is on the extracellular side. An N-linked (GlcNAc...) asparagine glycan is attached at Asn-432. A helical transmembrane segment spans residues 443-463 (AVIMVMLVTTFLMIPIMLLVW). The Cytoplasmic segment spans residues 464–468 (RSHWT). Residues 469 to 489 (LVVAFTVLSLLVEIPYFSAVV) form a helical membrane-spanning segment. The Extracellular portion of the chain corresponds to 490–494 (RKIDQ). A helical transmembrane segment spans residues 495–515 (GGWVPLVFAAGFMIIMYVWHY). Topologically, residues 516–793 (GTLKRYEFEM…MLNVGQVFYV (278 aa)) are cytoplasmic.

Belongs to the HAK/KUP transporter (TC 2.A.72.3) family.

The protein resides in the membrane. In terms of biological role, high-affinity potassium transporter. This Oryza sativa subsp. japonica (Rice) protein is Potassium transporter 18 (HAK18).